A 340-amino-acid chain; its full sequence is 4-dimethylallyltryptophan N-methyltransferase easF (340 aa).

This sequence belongs to the methyltransferase superfamily. Homodimer.

It carries out the reaction 4-(3-methylbut-2-enyl)-L-tryptophan + S-adenosyl-L-methionine = 4-(3-methylbut-2-enyl)-L-abrine + S-adenosyl-L-homocysteine + H(+). Its pathway is alkaloid biosynthesis; ergot alkaloid biosynthesis. In terms of biological role, 4-dimethylallyltryptophan N-methyltransferase; part of the gene cluster that mediates the biosynthesis of fungal ergot alkaloid. DmaW catalyzes the first step of ergot alkaloid biosynthesis by condensing dimethylallyl diphosphate (DMAP) and tryptophan to form 4-dimethylallyl-L-tryptophan. The second step is catalyzed by the methyltransferase easF that methylates 4-dimethylallyl-L-tryptophan in the presence of S-adenosyl-L-methionine, resulting in the formation of 4-dimethylallyl-L-abrine. The catalase easC and the FAD-dependent oxidoreductase easE then transform 4-dimethylallyl-L-abrine to chanoclavine-I which is further oxidized by easD in the presence of NAD(+), resulting in the formation of chanoclavine-I aldehyde. Chanoclavine-I aldehyde is the precursor of ergoamides and ergopeptines in Clavicipitaceae, and clavine-type alcaloids such as fumiclavine in Trichocomaceae. However, the metabolites downstream of chanoclavine-I aldehyde in Arthrodermataceae have not been identified yet. This Trichophyton verrucosum (strain HKI 0517) protein is 4-dimethylallyltryptophan N-methyltransferase easF.